A 644-amino-acid chain; its full sequence is 3D-(3,5/4)-trihydroxycyclohexane-1,2-dione hydrolase (644 aa).

Glu-65 provides a ligand contact to thiamine diphosphate. The tract at residues 442-522 is thiamine pyrophosphate binding; sequence SLPGDLQRMW…INVLLFDNSG (81 aa). Asp-493 and Asn-520 together coordinate Mg(2+).

Belongs to the TPP enzyme family. It depends on Mg(2+) as a cofactor. The cofactor is thiamine diphosphate.

The catalysed reaction is 3D-3,5/4-trihydroxycyclohexane-1,2-dione + H2O = 5-deoxy-D-glucuronate + H(+). It functions in the pathway polyol metabolism; myo-inositol degradation into acetyl-CoA; acetyl-CoA from myo-inositol: step 3/7. Its function is as follows. Involved in the cleavage of the C1-C2 bond of 3D-(3,5/4)-trihydroxycyclohexane-1,2-dione (THcHDO) to yield 5-deoxy-glucuronate (5DG). This Bacillus anthracis (strain A0248) protein is 3D-(3,5/4)-trihydroxycyclohexane-1,2-dione hydrolase.